The chain runs to 255 residues: tRNA uridine(34) hydroxylase (255 aa).

A Rhodanese domain is found at 125 to 219; sequence ATPDTILLDV…YLEQIPESES (95 aa). The Cysteine persulfide intermediate role is filled by cysteine 179.

The protein belongs to the TrhO family.

It catalyses the reaction uridine(34) in tRNA + AH2 + O2 = 5-hydroxyuridine(34) in tRNA + A + H2O. Functionally, catalyzes oxygen-dependent 5-hydroxyuridine (ho5U) modification at position 34 in tRNAs. This is tRNA uridine(34) hydroxylase from Nitrobacter winogradskyi (strain ATCC 25391 / DSM 10237 / CIP 104748 / NCIMB 11846 / Nb-255).